Consider the following 835-residue polypeptide: Disease resistance protein RPP13 (835 aa).

Residues 25 to 41 (MAVKEDLEELKTELTCI) are a coiled coil. The NB-ARC domain maps to 144–453 (SSLRVRQLRR…AEGFIQGDEE (310 aa)). An ATP-binding site is contributed by 192-199 (GMGGLGKT).

It belongs to the disease resistance NB-LRR family. RPP13 subfamily.

Disease resistance protein. Resistance proteins guard the plant against pathogens that contain an appropriate avirulence protein via an indirect interaction with this avirulence protein. That triggers a defense system including the hypersensitive response, which restricts the pathogen growth. In contrast to other resistance proteins, it works independently of ESD1 and NSD1 proteins and does not require the accumulation of salicylic acid, suggesting the existence of an independent signaling pathway. The specificity to avirulence proteins differs in the different cultivars. This is Disease resistance protein RPP13 (RPP13) from Arabidopsis thaliana (Mouse-ear cress).